We begin with the raw amino-acid sequence, 93 residues long: Islet amyloid polypeptide (93 aa).

Residues 1 to 23 form the signal peptide; the sequence is MRCISRLPAVLLILSVALGHLRA. Residues 24-35 constitute a propeptide that is removed on maturation; the sequence is TPVGSGTNPQVD. A disulfide bond links Cys39 and Cys44. Tyr74 carries the post-translational modification Tyrosine amide. Positions 78 to 93 are excised as a propeptide; it reads NVAEDPNRESLDFLLL.

This sequence belongs to the calcitonin family. As to quaternary structure, can form homodimers. Interacts with IDE and INS. Interaction with INS inhibits homodimerization and fibril formation. As to expression, abundant in the islets of Langerhans but is not present in the brain or seven other tissues examined.

Its subcellular location is the secreted. Its function is as follows. Amylin/IAPP is a glucoregulatory peptide hormone that plays an important role in the regulation of energy homeostasis. Selectively inhibits insulin-stimulated glucose utilization and glycogen deposition in muscle, while not affecting adipocyte glucose metabolism. IAPP function is mediated by the CALCR-RAMPs (AMYRs) receptor complexes. Amylin can also bind CALCR receptor in the absence of RAMPs, although it is more selective for AMYRs. The polypeptide is Islet amyloid polypeptide (Rattus norvegicus (Rat)).